A 283-amino-acid polypeptide reads, in one-letter code: Bifunctional protein FolD (283 aa).

Residues 165–167 (GRS), Ser-190, and Thr-231 contribute to the NADP(+) site.

Belongs to the tetrahydrofolate dehydrogenase/cyclohydrolase family. As to quaternary structure, homodimer.

The enzyme catalyses (6R)-5,10-methylene-5,6,7,8-tetrahydrofolate + NADP(+) = (6R)-5,10-methenyltetrahydrofolate + NADPH. It catalyses the reaction (6R)-5,10-methenyltetrahydrofolate + H2O = (6R)-10-formyltetrahydrofolate + H(+). It functions in the pathway one-carbon metabolism; tetrahydrofolate interconversion. Functionally, catalyzes the oxidation of 5,10-methylenetetrahydrofolate to 5,10-methenyltetrahydrofolate and then the hydrolysis of 5,10-methenyltetrahydrofolate to 10-formyltetrahydrofolate. This is Bifunctional protein FolD from Nocardia farcinica (strain IFM 10152).